Here is a 385-residue protein sequence, read N- to C-terminus: Spindle pole component BBP1 (385 aa).

At S29 the chain carries Phosphoserine. Residues 34-48 show a composition bias toward basic and acidic residues; that stretch reads YKDQEERRDRSRYAQ. A disordered region spans residues 34–76; sequence YKDQEERRDRSRYAQDDTNFSMKFGNDSNRRSTNLSRSNSWSG. Low complexity predominate over residues 64 to 75; the sequence is RSTNLSRSNSWS. Phosphoserine is present on residues S73 and S115. Residues 229-355 are a coiled coil; the sequence is QMDLNSRDLE…KDMQRDNYES (127 aa).

It belongs to the BBP1 family. Homodimer. Interacts with KAR1, MPS2 and SPC29.

The protein localises to the cytoplasm. It localises to the cytoskeleton. It is found in the microtubule organizing center. The protein resides in the spindle pole body. Functionally, component of the spindle pole body (SPB) required for insertion of the nascent SPB into the nuclear envelope and for the proper execution of spindle pole body (SPB) duplication. Connects the central plaque of the SPB with the half-bridge. Required for proper localization of CDC5 at the SPB and for proper M-phase progression. This chain is Spindle pole component BBP1 (BBP1), found in Saccharomyces cerevisiae (strain ATCC 204508 / S288c) (Baker's yeast).